The chain runs to 387 residues: Phosphoglycerate kinase (387 aa).

Substrate contacts are provided by residues Asp-21–Asn-23, Arg-36, and His-59–Arg-62. The residue at position 84 (Lys-84) is an N6-acetyllysine. Arg-113 and Arg-146 together coordinate substrate. Residues Lys-197, Glu-314, and Gly-340–Thr-343 contribute to the ATP site.

The protein belongs to the phosphoglycerate kinase family. Monomer.

The protein resides in the cytoplasm. The enzyme catalyses (2R)-3-phosphoglycerate + ATP = (2R)-3-phospho-glyceroyl phosphate + ADP. Its pathway is carbohydrate degradation; glycolysis; pyruvate from D-glyceraldehyde 3-phosphate: step 2/5. In Shigella sonnei (strain Ss046), this protein is Phosphoglycerate kinase.